Here is a 293-residue protein sequence, read N- to C-terminus: DNA repair protein RecO (293 aa).

This sequence belongs to the RecO family.

Involved in DNA repair and RecF pathway recombination. The protein is DNA repair protein RecO of Cyanothece sp. (strain PCC 7425 / ATCC 29141).